Here is a 191-residue protein sequence, read N- to C-terminus: Potassium-transporting ATPase KdpC subunit (191 aa).

A helical membrane pass occupies residues 6–26; sequence PALVLFILLTLLTGGVYPLLT.

This sequence belongs to the KdpC family. As to quaternary structure, the system is composed of three essential subunits: KdpA, KdpB and KdpC.

It is found in the cell inner membrane. Part of the high-affinity ATP-driven potassium transport (or Kdp) system, which catalyzes the hydrolysis of ATP coupled with the electrogenic transport of potassium into the cytoplasm. This subunit acts as a catalytic chaperone that increases the ATP-binding affinity of the ATP-hydrolyzing subunit KdpB by the formation of a transient KdpB/KdpC/ATP ternary complex. This is Potassium-transporting ATPase KdpC subunit from Klebsiella pneumoniae (strain 342).